A 163-amino-acid chain; its full sequence is Phosphopantetheine adenylyltransferase (163 aa).

Residue T10 participates in substrate binding. Residues 10-11 (TF) and H18 each bind ATP. Residues K42, L74, and R88 each contribute to the substrate site. ATP contacts are provided by residues 89 to 91 (GLR), E99, and 124 to 130 (NSFISST).

This sequence belongs to the bacterial CoaD family. Homohexamer. Requires Mg(2+) as cofactor.

Its subcellular location is the cytoplasm. The enzyme catalyses (R)-4'-phosphopantetheine + ATP + H(+) = 3'-dephospho-CoA + diphosphate. It participates in cofactor biosynthesis; coenzyme A biosynthesis; CoA from (R)-pantothenate: step 4/5. Its function is as follows. Reversibly transfers an adenylyl group from ATP to 4'-phosphopantetheine, yielding dephospho-CoA (dPCoA) and pyrophosphate. The chain is Phosphopantetheine adenylyltransferase from Shewanella baltica (strain OS155 / ATCC BAA-1091).